A 122-amino-acid polypeptide reads, in one-letter code: Large ribosomal subunit protein uL14 (122 aa).

It belongs to the universal ribosomal protein uL14 family. As to quaternary structure, part of the 50S ribosomal subunit. Forms a cluster with proteins L3 and L19. In the 70S ribosome, L14 and L19 interact and together make contacts with the 16S rRNA in bridges B5 and B8.

Its function is as follows. Binds to 23S rRNA. Forms part of two intersubunit bridges in the 70S ribosome. In Desulforamulus reducens (strain ATCC BAA-1160 / DSM 100696 / MI-1) (Desulfotomaculum reducens), this protein is Large ribosomal subunit protein uL14.